The chain runs to 566 residues: Membrane protein insertase YidC (566 aa).

A run of 5 helical transmembrane segments spans residues 3-23 (IKRI…FNAW), 346-366 (GWLW…HAVV), 369-389 (WGWS…WFSA), 436-456 (GGCL…YVII), and 509-529 (MWIL…GLVL).

It belongs to the OXA1/ALB3/YidC family. Type 1 subfamily. As to quaternary structure, interacts with the Sec translocase complex via SecD. Specifically interacts with transmembrane segments of nascent integral membrane proteins during membrane integration.

It is found in the cell inner membrane. Its function is as follows. Required for the insertion and/or proper folding and/or complex formation of integral membrane proteins into the membrane. Involved in integration of membrane proteins that insert both dependently and independently of the Sec translocase complex, as well as at least some lipoproteins. Aids folding of multispanning membrane proteins. This chain is Membrane protein insertase YidC, found in Coxiella burnetii (strain RSA 331 / Henzerling II).